Here is a 179-residue protein sequence, read N- to C-terminus: Large ribosomal subunit protein uL16 (179 aa).

The interval 147–179 (KASSASLANLDEDANSQTDDETSSSGSVATVES) is disordered. A compositionally biased stretch (acidic residues) spans 156 to 168 (LDEDANSQTDDET). A compositionally biased stretch (polar residues) spans 169 to 179 (SSSGSVATVES).

Belongs to the universal ribosomal protein uL16 family. In terms of assembly, part of the 50S ribosomal subunit.

In terms of biological role, binds 23S rRNA and is also seen to make contacts with the A and possibly P site tRNAs. This chain is Large ribosomal subunit protein uL16, found in Prochlorococcus marinus (strain MIT 9211).